A 388-amino-acid polypeptide reads, in one-letter code: Protein phosphatase 2C 57 (388 aa).

One can recognise a PPM-type phosphatase domain in the interval 59–348; that stretch reads RWGYTSVQGF…DNISIIIADL (290 aa). Residues aspartate 93, glycine 94, aspartate 296, and aspartate 339 each contribute to the Mn(2+) site. Residues 363–383 traverse the membrane as a helical segment; sequence VVVELVQAATTIGLVTVGIWM.

This sequence belongs to the PP2C family. It depends on Mg(2+) as a cofactor. Requires Mn(2+) as cofactor.

It is found in the membrane. It localises to the plastid. The protein localises to the chloroplast stroma. It catalyses the reaction O-phospho-L-seryl-[protein] + H2O = L-seryl-[protein] + phosphate. The enzyme catalyses O-phospho-L-threonyl-[protein] + H2O = L-threonyl-[protein] + phosphate. Functionally, protein phosphatase specifically required for efficient dephosphorylation of the light-harvesting complex II outer antennae (LCHII) and transition from state 2 to state 1. State transition plays a central role in response to environmental changes and allows to adjust to changing light conditions via the redistribution of light excitation energy between photosystem II (PSII) and photosystem I (PSI) in a short time by relocating LHCII proteins. Mainly responsible for the dephosphorylation of Lhcb1 and Lhcb2 but not of the photosystem II core proteins. In Arabidopsis thaliana (Mouse-ear cress), this protein is Protein phosphatase 2C 57.